Consider the following 303-residue polypeptide: Lipase chaperone (303 aa).

Residues 7-23 (TLAAACAAWLAWWAWPD) form a helical membrane-spanning segment.

The protein belongs to the lipase chaperone family.

It localises to the cell inner membrane. May be involved in the folding of the extracellular lipase during its passage through the periplasm. In Chromobacterium violaceum (strain ATCC 12472 / DSM 30191 / JCM 1249 / CCUG 213 / NBRC 12614 / NCIMB 9131 / NCTC 9757 / MK), this protein is Lipase chaperone (lifO).